A 227-amino-acid polypeptide reads, in one-letter code: Guanylate kinase (227 aa).

The 179-residue stretch at 21–199 (GNLFMVVAPS…ALAELECIVA (179 aa)) folds into the Guanylate kinase-like domain. Position 28 to 35 (28 to 35 (APSGAGKS)) interacts with ATP.

The protein belongs to the guanylate kinase family.

The protein localises to the cytoplasm. It carries out the reaction GMP + ATP = GDP + ADP. Essential for recycling GMP and indirectly, cGMP. This Burkholderia orbicola (strain AU 1054) protein is Guanylate kinase.